Consider the following 1080-residue polypeptide: Myocardin-related transcription factor B (1080 aa).

The stretch at 40–65 is one RPEL 1 repeat; the sequence is EVLQLRLQQRRTREQLVDQGIMPPLK. S66 bears the Phosphoserine mark. RPEL repeat units lie at residues 84–109 and 128–153; these read NFLK…EETF and DDLN…PVDS. Disordered regions lie at residues 170–222, 234–311, 352–384, and 477–501; these read THGE…AQFT, TPLT…EPQM, PIKT…SSLD, and PHVE…LSTD. Composition is skewed to polar residues over residues 188 to 200 and 240 to 259; these read QPAS…SAAS and QPPT…SSAK. Basic and acidic residues predominate over residues 272 to 287; the sequence is NPNDKHRSKKCKDPKP. The span at 358–370 shows a compositional bias: low complexity; that stretch reads NSSSGSNSGSSSS. Residues 383-417 form the SAP domain; the sequence is LDDLKVSELKTELKLRGLPVSGTKPDLIERLKPYQ. Phosphoserine is present on residues S531, S535, and S537. A coiled-coil region spans residues 539 to 594; the sequence is SSSTLSTLELDAAEKDRKLQEKEKQIEELKRKLEQEQKLVEVLKMQLEVEKRGQQR. The required for interaction with itself and with MRTFA stretch occupies residues 557-585; that stretch reads LQEKEKQIEELKRKLEQEQKLVEVLKMQL. Disordered stretches follow at residues 588-646 and 794-846; these read EKRG…SVGQ and LQYQ…PQQF. The segment covering 595–606 has biased composition (pro residues); that stretch reads PPDPQPSDPPHP. K622 is covalently cross-linked (Glycyl lysine isopeptide (Lys-Gly) (interchain with G-Cter in SUMO1)). Residues 794–821 show a composition bias toward polar residues; the sequence is LQYQRQPGPTNQQPFVSKTSNPALQSRT. Position 913 is a phosphoserine (S913). The interval 969 to 988 is disordered; that stretch reads GTLPSATDTGPLQNSSEDRE. Residues 972 to 983 show a composition bias toward polar residues; that stretch reads PSATDTGPLQNS.

As to quaternary structure, interacts with MRTFA and SRF. Post-translationally, O-glycosylated. Widely expressed. High expression in heart, brain and testis. Lower expression in lung, liver and kidney.

It localises to the nucleus. Its function is as follows. Acts as a transcriptional coactivator of serum response factor (SRF). Required for skeletal myogenic differentiation. The chain is Myocardin-related transcription factor B (Mrtfb) from Mus musculus (Mouse).